We begin with the raw amino-acid sequence, 522 residues long: Cytochrome P450 monooxygenase sirB (522 aa).

A helical transmembrane segment spans residues 22 to 42; sequence ASAILFCTLLTVFLFISQGTV. N-linked (GlcNAc...) asparagine glycosylation occurs at Asn191. Residues 304–324 traverse the membrane as a helical segment; that stretch reads VLHLSFAATGTVAILITHMIY. Cys462 provides a ligand contact to heme.

The protein belongs to the cytochrome P450 family. The cofactor is heme.

It localises to the membrane. It participates in mycotoxin biosynthesis. Functionally, cytochrome P450 monooxygenase; part of the gene cluster that mediates the biosynthesis of sirodesmin PL, an epipolythiodioxopiperazine (ETP) characterized by a disulfide bridged cyclic dipeptide and that acts as a phytotoxin which is involved in the blackleg didease of canola. SirD catalyzes the O-prenylation of L-tyrosine (L-Tyr) in the presence of dimethylallyl diphosphate (DMAPP) to yield 4-O-dimethylallyl-L-Tyr, and therefore represents probably the first pathway-specific enzyme in the biosynthesis of sirodesmin PL. 4-O-dimethylallyl-L-Tyr, then undergoes condensation with L-Ser in a reaction catalyzed by the non-ribosomal peptide synthase sirP to form the diketopiperazine (DKP) backbone. Further bishydroxylation of the DKP performed by the cytochrome P450 monooxygenase sirC leads to the production of the intermediate phomamide. This step is essential to form the reactive thiol group required for toxicity of sirodesmin PL. The next steps of sirodesmin biosynthesis are not well understood yet, but some predictions could be made from intermediate compounds identification. Phomamide is converted into phomalizarine via oxidation, probably by sirT. Further oxidation, methylation (by sirM or sirN) and reduction steps convert phomalizarine to deacetyl sirodesmin. Finally, acetyltransferase sirH probably acetylates deacetyl sirodesmin to produce sirodesmin PL. The chain is Cytochrome P450 monooxygenase sirB from Leptosphaeria maculans (Blackleg fungus).